A 146-amino-acid polypeptide reads, in one-letter code: Large ribosomal subunit protein uL15 (146 aa).

Residues M1–P56 are disordered. Gly residues-rich tracts occupy residues Q21–Q35 and S42–G52.

Belongs to the universal ribosomal protein uL15 family. As to quaternary structure, part of the 50S ribosomal subunit.

In terms of biological role, binds to the 23S rRNA. The protein is Large ribosomal subunit protein uL15 of Carboxydothermus hydrogenoformans (strain ATCC BAA-161 / DSM 6008 / Z-2901).